We begin with the raw amino-acid sequence, 324 residues long: Glycerol-3-phosphate dehydrogenase [NAD(P)+] (324 aa).

NADPH contacts are provided by Trp-15, Arg-35, and Lys-101. The sn-glycerol 3-phosphate site is built by Lys-101 and Gly-129. Ala-133 serves as a coordination point for NADPH. Sn-glycerol 3-phosphate is bound by residues Lys-184, Asp-237, Ser-247, Arg-248, and Asn-249. Lys-184 acts as the Proton acceptor in catalysis. Arg-248 contacts NADPH. The NADPH site is built by Val-272 and Glu-274.

It belongs to the NAD-dependent glycerol-3-phosphate dehydrogenase family.

The protein resides in the cytoplasm. The enzyme catalyses sn-glycerol 3-phosphate + NAD(+) = dihydroxyacetone phosphate + NADH + H(+). The catalysed reaction is sn-glycerol 3-phosphate + NADP(+) = dihydroxyacetone phosphate + NADPH + H(+). The protein operates within membrane lipid metabolism; glycerophospholipid metabolism. Functionally, catalyzes the reduction of the glycolytic intermediate dihydroxyacetone phosphate (DHAP) to sn-glycerol 3-phosphate (G3P), the key precursor for phospholipid synthesis. This Gluconobacter oxydans (strain 621H) (Gluconobacter suboxydans) protein is Glycerol-3-phosphate dehydrogenase [NAD(P)+].